The following is a 559-amino-acid chain: NXPE family member 3 (559 aa).

A signal peptide spans 1–30 (MWTNFFKLRLFCCLLAVLMVVVLVVNVTQV). N-linked (GlcNAc...) asparagine glycans are attached at residues Asn26, Asn237, and Asn346.

The protein belongs to the NXPE family.

Its subcellular location is the secreted. In Pongo abelii (Sumatran orangutan), this protein is NXPE family member 3 (NXPE3).